We begin with the raw amino-acid sequence, 202 residues long: Small ribosomal subunit protein uS4c (202 aa).

Residues 90 to 153 (MRLDNVIFRL…KSETIISKNI (64 aa)) enclose the S4 RNA-binding domain.

Belongs to the universal ribosomal protein uS4 family. In terms of assembly, part of the 30S ribosomal subunit. Contacts protein S5. The interaction surface between S4 and S5 is involved in control of translational fidelity.

It is found in the plastid. The protein localises to the chloroplast. In terms of biological role, one of the primary rRNA binding proteins, it binds directly to 16S rRNA where it nucleates assembly of the body of the 30S subunit. Functionally, with S5 and S12 plays an important role in translational accuracy. In Arbusculohypopterygium arbuscula (Moss), this protein is Small ribosomal subunit protein uS4c (rps4).